The sequence spans 259 residues: Protein POLYCHOME (259 aa).

Positions 236 to 259 are disordered; sequence KMKSTPSAKRAEREKRVRTLMSMR.

As to quaternary structure, interacts with APC/C activators such as APC5, FZR2, FZR3, CDC20.1 and CDC20.5. As to expression, expressed mainly in actively dividing cells (e.g. central cylinder of the root tip, young leaves and vascular tissues).

It is found in the nucleus. Its function is as follows. Negative regulator of the anaphase-promoting complex/cyclosome (APC/C) ubiquitin ligase required for proper mitotic progression and cell fate determination; inhibits premature cell differentiation. Prevents DNA endoreplication by promoting the maintenance of the mitotic state by preferentially inhibiting APC/C(FZR) and triggering cyclins accumulation (e.g. CYCB1-1, CYCB1-2 and CYCA2-3) in a temporal manner. Required for megagametophyte and endosperm development. Counteracts the activity of CCS52A1 thus inhibiting the turnover of CYCA2-3. Confers immunity to bacterial pathogens (e.g. Pseudomonas syringae pv. tomato DC3000), which is associated with increased expression of disease resistance (R) genes. The polypeptide is Protein POLYCHOME (PYM) (Arabidopsis thaliana (Mouse-ear cress)).